The primary structure comprises 528 residues: MTTIERITTPRIRIFDTTLRDGEQSPGCSMSPPQKLVMARALDELGVDIIETGFPASSQSDRDAMALIGRELRRPSLSLAVLSRCLQADIETSARALEAAANPRLHVFLSTSPLHREHKLRMTREQVLESVRKHVSLARSYIDDVEFSAEDATRTELDYLIEVSRAAISAGATTINLPDTVGFTTPEEIREMFQQVIAGVADVPNAANVIFSAHCHNDLGLAVANSLAAIEGGARQVECTVNGIGERAGNCSLEEIAMVLKVRQAFYEQDSSINTPRIVGTSQLLQRLVGMPVQRNKAIVGANAFAHESGIHQHGMLRHRGTYEIMRPEDVGWEDSQMVLGRHSGRAAVEARLRALGFWLEEDELKLVFEQFKGLCEQQRVVTDADLQTLMQGGSNAQGYRLASMTISDVGSRANALVELSDPDGNRVAETAQGDGPVDALFGALSAATGVQLMLDSYHVHSVGIGADARGEANLSVRHEGVEYDGTGTSKDIIEASALAWLDVANRLLRQRQANAASTTEAPAPATA.

In terms of domain architecture, Pyruvate carboxyltransferase spans 12 to 279 (IRIFDTTLRD…DSSINTPRIV (268 aa)). D21, H214, H216, and N250 together coordinate Mn(2+). Residues 401 to 528 (RLASMTISDV…TTEAPAPATA (128 aa)) form a regulatory domain region.

The protein belongs to the alpha-IPM synthase/homocitrate synthase family. LeuA type 1 subfamily. Homodimer. The cofactor is Mn(2+).

The protein localises to the cytoplasm. The catalysed reaction is 3-methyl-2-oxobutanoate + acetyl-CoA + H2O = (2S)-2-isopropylmalate + CoA + H(+). It participates in amino-acid biosynthesis; L-leucine biosynthesis; L-leucine from 3-methyl-2-oxobutanoate: step 1/4. Its function is as follows. Catalyzes the condensation of the acetyl group of acetyl-CoA with 3-methyl-2-oxobutanoate (2-ketoisovalerate) to form 3-carboxy-3-hydroxy-4-methylpentanoate (2-isopropylmalate). The polypeptide is 2-isopropylmalate synthase (Stenotrophomonas maltophilia (strain R551-3)).